We begin with the raw amino-acid sequence, 309 residues long: Taste receptor type 2 member 43 (309 aa).

Residue methionine 1 is a topological domain, extracellular. A helical membrane pass occupies residues 2 to 22; sequence ITFLPIIFSSLVVVTFVIGNF. The Cytoplasmic segment spans residues 23 to 46; that stretch reads ANGFIALVNSIEWFKRQKISFADQ. The chain crosses the membrane as a helical span at residues 47 to 67; the sequence is ILTALAVSRVGLLWVLLLNWY. At 68-86 the chain is on the extracellular side; that stretch reads LTVLNPAFNSVEVRTTAYN. A helical membrane pass occupies residues 87 to 107; that stretch reads IWAVINHFSNWLATSLSIFYL. Residues 108-126 lie on the Cytoplasmic side of the membrane; sequence LKIANFSNFIFLHLKRRVK. Residues 127-147 traverse the membrane as a helical segment; that stretch reads SVILVMLLGPLLFLACHLFMI. At 148-178 the chain is on the extracellular side; sequence NMNEIVRTKEFDGNMTWKIKLKSAMYFSNMT. Residues asparagine 161 and asparagine 176 are each glycosylated (N-linked (GlcNAc...) asparagine). Residues 179–199 traverse the membrane as a helical segment; that stretch reads VTMVANLVPFTLTLLSFLLLI. The Cytoplasmic segment spans residues 200–229; that stretch reads CSLCKHLKKMQLHGKGSQDPSTKVHIKALQ. The helical transmembrane segment at 230–250 threads the bilayer; that stretch reads TVISFLLLCAIYFLSIMISVW. The Extracellular portion of the chain corresponds to 251–259; that stretch reads SFGSLENKP. The helical transmembrane segment at 260 to 280 threads the bilayer; it reads VFMFCKAIRFSYPSIHPFILI. Residues 281-309 are Cytoplasmic-facing; it reads WGNKKLKQTFLSVFWQMRYWVKGEKTSSP.

It belongs to the G-protein coupled receptor T2R family.

It localises to the membrane. It is found in the cell projection. Its subcellular location is the cilium membrane. Functionally, gustducin-coupled receptor immplicated in the perception of bitter compounds in the oral cavity and the gastrointestinal tract. Signals through PLCB2 and the calcium-regulated cation channel TRPM5. Activated by the sulfonyl amide sweeteners saccharin and acesulfame K. In airway epithelial cells, binding of bitter compounds increases the intracellular calcium ion concentration and stimulates ciliary beat frequency. May act as chemosensory receptors in airway epithelial cells to detect and eliminate potential noxious agents from the airways. The polypeptide is Taste receptor type 2 member 43 (TAS2R43) (Pan paniscus (Pygmy chimpanzee)).